We begin with the raw amino-acid sequence, 404 residues long: MKLPIYLDYAATTPVDPRVAEKMFQYMTMDGIFGNPASRSHRYGWQAEEAVDVARNQVAELINADHREIVFTSGATESNNLAIKGVAHFYNKKGKHIITSKTEHKAVLDTCRQLEREGFEVTYLEPEANGIIPMERLEAAMRDDTILVSIMHVNNEIGVIHDVDAIGELCRSKGIIFHMDAAQSAGKLPIDVQTTKVDLISISGHKMYGPKGIGALYVRRKPRIRLEAQMHGGGHERGMRSGTLATHQIVGLGEAAAIAKAEMATDNARIAKLRDKLWNGIKHIEETYVNGDMTHRVSGSLNVSFNYVEGESLMMALKDLAVSSGSACTSASLEPSYVLRALGLNDEMAHSSIRFSIGRFTTEEEIDHAIETITQSIDKLREMSPLWEMFKDGIDLNQVQWAHH.

Residues 75–76 (AT), Asn155, Gln183, and 203–205 (SGH) contribute to the pyridoxal 5'-phosphate site. The residue at position 206 (Lys206) is an N6-(pyridoxal phosphate)lysine. A pyridoxal 5'-phosphate-binding site is contributed by Thr243. Cys328 acts as the Cysteine persulfide intermediate in catalysis. [2Fe-2S] cluster is bound at residue Cys328.

This sequence belongs to the class-V pyridoxal-phosphate-dependent aminotransferase family. NifS/IscS subfamily. In terms of assembly, homodimer. Forms a heterotetramer with IscU, interacts with other sulfur acceptors. Pyridoxal 5'-phosphate serves as cofactor.

Its subcellular location is the cytoplasm. The catalysed reaction is (sulfur carrier)-H + L-cysteine = (sulfur carrier)-SH + L-alanine. Its pathway is cofactor biosynthesis; iron-sulfur cluster biosynthesis. Its function is as follows. Master enzyme that delivers sulfur to a number of partners involved in Fe-S cluster assembly, tRNA modification or cofactor biosynthesis. Catalyzes the removal of elemental sulfur atoms from cysteine to produce alanine. Functions as a sulfur delivery protein for Fe-S cluster synthesis onto IscU, an Fe-S scaffold assembly protein, as well as other S acceptor proteins. This is Cysteine desulfurase IscS from Shewanella sp. (strain MR-4).